A 159-amino-acid polypeptide reads, in one-letter code: Galactose-specific lectin nattectin (159 aa).

An N-terminal signal peptide occupies residues 1–21 (MASVPHFTVFLFLACALGIGA). Positions 22 to 24 (NVT) are excised as a propeptide. 3 disulfide bridges follow: Cys31–Cys42, Cys59–Cys155, and Cys132–Cys147. The region spanning 38–156 (HGSRCFTFHR…CKVKRSFLCA (119 aa)) is the C-type lectin domain. Ca(2+) contacts are provided by Gln122, Asp124, Glu130, and Asn143. The short motif at 122 to 124 (QPD) is the Galactose-binding element.

In terms of assembly, monomer. Not glycosylated. In terms of tissue distribution, expressed by the venom gland.

Its subcellular location is the secreted. Its function is as follows. Galactose specific lectin that exhibits hemagglutination activity (minimum hemagluttination concentration = 2.5 ug/well) in a calcium-independent fashion. Has remarkable pro-inflammatory activity, inducing neutrophil mobilization in mice. Plays a crucial role in the innate immune system and chronic manifestations, especially in neutrophil mobilization. In Thalassophryne nattereri (Copper Joe toadfish), this protein is Galactose-specific lectin nattectin.